The primary structure comprises 711 residues: Early transcription factor 82 kDa subunit (711 aa).

It belongs to the poxviridae VETF large subunit family. As to quaternary structure, heterodimer of a 70 kDa and a 82 kDa subunit. Part of the early transcription complex composed of ETF, RAP94, and the DNA-directed RNA polymerase.

Its function is as follows. Acts with RNA polymerase to initiate transcription from early gene promoters. Is recruited by the RPO-associated protein of 94 kDa (RAP94) to form the early transcription complex, which also contains the core RNA polymerase. ETF heterodimer binds to early gene promoters. The polypeptide is Early transcription factor 82 kDa subunit (VETFL) (Oryctolagus cuniculus (Rabbit)).